Here is a 231-residue protein sequence, read N- to C-terminus: Lipoprotein-releasing system ATP-binding protein LolD (231 aa).

The 221-residue stretch at 11–231 (LQAEHLGKVY…HMENGRLQPD (221 aa)) folds into the ABC transporter domain. Position 47–54 (47–54 (GASGSGKS)) interacts with ATP.

Belongs to the ABC transporter superfamily. Lipoprotein translocase (TC 3.A.1.125) family. In terms of assembly, the complex is composed of two ATP-binding proteins (LolD) and two transmembrane proteins (LolC and LolE).

The protein resides in the cell inner membrane. Its function is as follows. Part of the ABC transporter complex LolCDE involved in the translocation of mature outer membrane-directed lipoproteins, from the inner membrane to the periplasmic chaperone, LolA. Responsible for the formation of the LolA-lipoprotein complex in an ATP-dependent manner. The protein is Lipoprotein-releasing system ATP-binding protein LolD of Bordetella bronchiseptica (strain ATCC BAA-588 / NCTC 13252 / RB50) (Alcaligenes bronchisepticus).